A 148-amino-acid polypeptide reads, in one-letter code: Ubiquitin-conjugating enzyme E2-16 kDa (148 aa).

One can recognise a UBC core domain in the interval 2–148; sequence SSSKRIAKEL…AKEWTKKYAV (147 aa). Position 12 is a phosphoserine (S12). Catalysis depends on C86, which acts as the Glycyl thioester intermediate. K91 participates in a covalent cross-link: Glycyl lysine isopeptide (Lys-Gly) (interchain with G-Cter in ubiquitin).

This sequence belongs to the ubiquitin-conjugating enzyme family. As to quaternary structure, component of the RSP5-UBA1-UBC5 ubiquitin ligase complex composed of E3 RSP5, E1 UBA1 and E2 UBC5. Post-translationally, the N-terminus is blocked.

The catalysed reaction is S-ubiquitinyl-[E1 ubiquitin-activating enzyme]-L-cysteine + [E2 ubiquitin-conjugating enzyme]-L-cysteine = [E1 ubiquitin-activating enzyme]-L-cysteine + S-ubiquitinyl-[E2 ubiquitin-conjugating enzyme]-L-cysteine.. The protein operates within protein modification; protein ubiquitination. Its function is as follows. Catalyzes the covalent attachment of ubiquitin to other proteins. Mediates the selective degradation of short-lived and abnormal proteins. The RSP5-UBA1-UBC5 ubiquitin ligase complex ubiquitinates RPO21 forming 'Lys-63'-linked polyubiquitin chains. In Saccharomyces cerevisiae (strain ATCC 204508 / S288c) (Baker's yeast), this protein is Ubiquitin-conjugating enzyme E2-16 kDa (UBC5).